Consider the following 704-residue polypeptide: Polyribonucleotide nucleotidyltransferase (704 aa).

Residues D485 and D491 each coordinate Mg(2+). One can recognise a KH domain in the interval 552 to 611 (PKILTMTINPDKIRDVIGPSGKMINKIIEDTGVKIDIEQDGTIYISSADTNMNNKAREII). The S1 motif domain occupies 621–689 (GQMYLGTVKR…NQGRVNLSRK (69 aa)).

The protein belongs to the polyribonucleotide nucleotidyltransferase family. It depends on Mg(2+) as a cofactor.

Its subcellular location is the cytoplasm. The enzyme catalyses RNA(n+1) + phosphate = RNA(n) + a ribonucleoside 5'-diphosphate. Its function is as follows. Involved in mRNA degradation. Catalyzes the phosphorolysis of single-stranded polyribonucleotides processively in the 3'- to 5'-direction. This chain is Polyribonucleotide nucleotidyltransferase, found in Halalkalibacterium halodurans (strain ATCC BAA-125 / DSM 18197 / FERM 7344 / JCM 9153 / C-125) (Bacillus halodurans).